The sequence spans 273 residues: 2,3,4,5-tetrahydropyridine-2,6-dicarboxylate N-succinyltransferase (273 aa).

Residues R105 and D142 each coordinate substrate.

This sequence belongs to the transferase hexapeptide repeat family. In terms of assembly, homotrimer.

It localises to the cytoplasm. It carries out the reaction (S)-2,3,4,5-tetrahydrodipicolinate + succinyl-CoA + H2O = (S)-2-succinylamino-6-oxoheptanedioate + CoA. It participates in amino-acid biosynthesis; L-lysine biosynthesis via DAP pathway; LL-2,6-diaminopimelate from (S)-tetrahydrodipicolinate (succinylase route): step 1/3. In Bordetella avium (strain 197N), this protein is 2,3,4,5-tetrahydropyridine-2,6-dicarboxylate N-succinyltransferase.